The following is a 213-amino-acid chain: MIVIFLGPPGAGKGTQGKKIAKKIDLPHIAVGDIFRTIIKTSTSEAELINNYVKQGALIPNEIVNQVIKVFLLSSKYKNGYILDGYPRNLEQAKFFEAFIQKPQIKIIYFDVADELLIKRVLGRYSCKNCGKIYNIHFLQPKIEHVCDVCSSSVFDYRKDDNKEVIKKRIKVYKTETYPLIDYYKNSGNFYIVNANKNEQEIENDIQKILKIN.

ATP is bound at residue 10 to 15 (GAGKGT). The segment at 30–59 (AVGDIFRTIIKTSTSEAELINNYVKQGALI) is NMP. AMP is bound by residues arginine 36, 57–59 (ALI), 85–88 (GYPR), and glutamine 92. Residues 123-161 (GRYSCKNCGKIYNIHFLQPKIEHVCDVCSSSVFDYRKDD) form an LID region. Arginine 124 is an ATP binding site. Zn(2+) contacts are provided by cysteine 127 and cysteine 130. 133–134 (IY) lines the ATP pocket. The Zn(2+) site is built by cysteine 147 and cysteine 150. The AMP site is built by arginine 158 and arginine 169. Lysine 197 contacts ATP.

The protein belongs to the adenylate kinase family. As to quaternary structure, monomer.

It localises to the cytoplasm. It catalyses the reaction AMP + ATP = 2 ADP. The protein operates within purine metabolism; AMP biosynthesis via salvage pathway; AMP from ADP: step 1/1. Catalyzes the reversible transfer of the terminal phosphate group between ATP and AMP. Plays an important role in cellular energy homeostasis and in adenine nucleotide metabolism. This chain is Adenylate kinase, found in Rickettsia prowazekii (strain Madrid E).